The chain runs to 84 residues: Toxin-like TcoNTxP1 (84 aa).

The first 19 residues, 1–19 (MKRMILFTSCLLLIDIVVG), serve as a signal peptide directing secretion. Positions 21–82 (KEGYPADSKG…VWDSATNKCG (62 aa)) constitute an LCN-type CS-alpha/beta domain. 4 cysteine pairs are disulfide-bonded: cysteine 31/cysteine 81, cysteine 35/cysteine 57, cysteine 43/cysteine 62, and cysteine 47/cysteine 64. Cysteine 81 carries the cysteine amide modification. Positions 82-84 (GKK) are excised as a propeptide.

As to expression, expressed by the venom gland.

It is found in the secreted. Its function is as follows. This protein is not toxic. It induces an immune response similar to that induced by whole venom. Thus, polyclonal antibodies raised against this protein can neutralize the effects of the venom. This is Toxin-like TcoNTxP1 from Tityus costatus (Brazilian scorpion).